The chain runs to 360 residues: MASATAPAAAVPTLASPLGQLRHLAEELRLLLPRVRVGEAQETTEEFNREMFWRRLNEAAVTVSREATTLTTVFSQLPLPSAQETQKFCEQVHAAIKAFIAVYYLLPKDQGITLRKLVRGATLDIVDGMAQLMEVLSITPTQSPENNELISYNSVWVACQQMPHIPRDNKAAALLMLTKNVDFVKDAHEEMERAVEECDPYSGLLNDTEENNSDNHNDEDDVLGFPSNQDLYWSEDDQELIIPCLALVRASKACLKKIRILVAENGKKDQVAQLDDIVDISDEISPSVDDLALSIYPPMCHLTVRINSAKLVSVLKKALEITKASHVTPQPEDSWIPLLINAIDHCMNRIKELTQSELEL.

At alanine 2 the chain carries N-acetylalanine. 2 interaction with TCF3 regions span residues 2 to 184 (ASAT…VDFV) and 150 to 360 (ISYN…ELEL). 2 interaction with RPLP0 regions span residues 2–190 (ASAT…AHEE) and 240–360 (LIIP…ELEL). The tract at residues 2-208 (ASATAPAAAV…DPYSGLLNDT (207 aa)) is required for interaction with CCND1.

It belongs to the CCNDBP1 family. As to quaternary structure, interacts with CCND1 and GRAP2. May also interact with COPS5, RPLP0, SIRT6, SYF2 and TCF3. Post-translationally, phosphorylated.

The protein resides in the cytoplasm. It is found in the nucleus. Functionally, may negatively regulate cell cycle progression. May act at least in part via inhibition of the cyclin-D1/CDK4 complex, thereby preventing phosphorylation of RB1 and blocking E2F-dependent transcription. The protein is Cyclin-D1-binding protein 1 (CCNDBP1) of Pongo abelii (Sumatran orangutan).